The primary structure comprises 95 residues: UPF0473 protein PEPE_1260 (95 aa).

This sequence belongs to the UPF0473 family.

The polypeptide is UPF0473 protein PEPE_1260 (Pediococcus pentosaceus (strain ATCC 25745 / CCUG 21536 / LMG 10740 / 183-1w)).